A 222-amino-acid chain; its full sequence is UPF0758 protein YPN_3801 (222 aa).

The MPN domain maps to 100–222 (VLLNPGITQK…CVSFAERGWL (123 aa)). 3 residues coordinate Zn(2+): histidine 171, histidine 173, and aspartate 184. The JAMM motif signature appears at 171–184 (HNHPSGKAEPSQAD).

Belongs to the UPF0758 family. YicR subfamily.

The sequence is that of UPF0758 protein YPN_3801 from Yersinia pestis bv. Antiqua (strain Nepal516).